A 328-amino-acid chain; its full sequence is Tryptophan--tRNA ligase (328 aa).

ATP is bound by residues 8-10 and 16-17; these read RPT and GH. The 'HIGH' region signature appears at 9–17; sequence PTGKLHIGH. Aspartate 136 serves as a coordination point for L-tryptophan. Residues 148–150, leucine 186, and 193–197 each bind ATP; these read GED and KMSKS. A 'KMSKS' region motif is present at residues 193–197; that stretch reads KMSKS.

This sequence belongs to the class-I aminoacyl-tRNA synthetase family. Homodimer.

It localises to the cytoplasm. The catalysed reaction is tRNA(Trp) + L-tryptophan + ATP = L-tryptophyl-tRNA(Trp) + AMP + diphosphate + H(+). Catalyzes the attachment of tryptophan to tRNA(Trp). This chain is Tryptophan--tRNA ligase, found in Thermotoga maritima (strain ATCC 43589 / DSM 3109 / JCM 10099 / NBRC 100826 / MSB8).